We begin with the raw amino-acid sequence, 177 residues long: Peptide methionine sulfoxide reductase MsrA 2 (177 aa).

The active site involves Cys12.

It belongs to the MsrA Met sulfoxide reductase family.

The catalysed reaction is L-methionyl-[protein] + [thioredoxin]-disulfide + H2O = L-methionyl-(S)-S-oxide-[protein] + [thioredoxin]-dithiol. It catalyses the reaction [thioredoxin]-disulfide + L-methionine + H2O = L-methionine (S)-S-oxide + [thioredoxin]-dithiol. In terms of biological role, has an important function as a repair enzyme for proteins that have been inactivated by oxidation. Catalyzes the reversible oxidation-reduction of methionine sulfoxide in proteins to methionine. This is Peptide methionine sulfoxide reductase MsrA 2 (msrA2) from Staphylococcus aureus (strain Mu50 / ATCC 700699).